The chain runs to 159 residues: UPF0587 protein v1g245604 (159 aa).

The Zn(2+) site is built by Cys-33, Cys-36, Cys-67, and Cys-70.

Belongs to the UPF0587 family.

This chain is UPF0587 protein v1g245604, found in Nematostella vectensis (Starlet sea anemone).